The following is a 343-amino-acid chain: Protease inhibitor Egf1.5a (343 aa).

The first 28 residues, 1 to 28, serve as a signal peptide directing secretion; it reads MYIDTGIMSNNIFLFAFFALVGLTRIEA. One can recognise a TIL domain in the interval 52 to 104; the sequence is CRENEHYNSTRIECEDECNDRNNKLCYRFQQFCWCNEGYIRNSSHICVKLEDC.

The protein belongs to the polydnaviridae EGF-like motif protein family. Interacts with host PAP1, PAP3 and SPH2.

In terms of biological role, counteracts the host humoral immune response by inhibiting the processing and the amidolytic activity of host PAP1 and PAP3. Thereby, melanization of host hemolymph, normally producing several reactive intermediates toxic for viruses, is deregulated and proper immune response cannot occur. In Microplitis demolitor bracovirus (isolate Webb) (MdBV), this protein is Protease inhibitor Egf1.5a (O1).